Consider the following 278-residue polypeptide: Orotidine 5'-phosphate decarboxylase (278 aa).

Catalysis depends on K95, which acts as the Proton donor.

This sequence belongs to the OMP decarboxylase family. Type 2 subfamily.

The catalysed reaction is orotidine 5'-phosphate + H(+) = UMP + CO2. The protein operates within pyrimidine metabolism; UMP biosynthesis via de novo pathway; UMP from orotate: step 2/2. This Corynebacterium glutamicum (strain ATCC 13032 / DSM 20300 / JCM 1318 / BCRC 11384 / CCUG 27702 / LMG 3730 / NBRC 12168 / NCIMB 10025 / NRRL B-2784 / 534) protein is Orotidine 5'-phosphate decarboxylase.